The primary structure comprises 463 residues: Argininosuccinate lyase (463 aa).

This sequence belongs to the lyase 1 family. Argininosuccinate lyase subfamily.

The protein resides in the cytoplasm. It carries out the reaction 2-(N(omega)-L-arginino)succinate = fumarate + L-arginine. It participates in amino-acid biosynthesis; L-arginine biosynthesis; L-arginine from L-ornithine and carbamoyl phosphate: step 3/3. This chain is Argininosuccinate lyase, found in Dinoroseobacter shibae (strain DSM 16493 / NCIMB 14021 / DFL 12).